Here is a 462-residue protein sequence, read N- to C-terminus: Fasciclin-like arabinogalactan protein 18 (462 aa).

The signal sequence occupies residues 1 to 25 (MDRCIYGCSVITIFFSFFFLLNASA). 3 N-linked (GlcNAc...) asparagine glycosylation sites follow: asparagine 32, asparagine 77, and asparagine 293. 2 consecutive FAS1 domains span residues 40 to 185 (NSNS…ERLL) and 271 to 414 (VKDF…DGVL).

This sequence belongs to the fasciclin-like AGP family.

The protein localises to the secreted. Its function is as follows. May be a cell surface adhesion protein. The polypeptide is Fasciclin-like arabinogalactan protein 18 (FLA18) (Arabidopsis thaliana (Mouse-ear cress)).